Consider the following 780-residue polypeptide: Translation initiation factor IF-2 (780 aa).

The disordered stretch occupies residues 44-194 (RQLDNAVDGT…TPPKPKELPE (151 aa)). Basic and acidic residues predominate over residues 53–65 (TNKKAEAPKKETT). Residues 66–81 (SNENGNSKGPNKPNMT) are compositionally biased toward polar residues. Low complexity-rich tracts occupy residues 82–93 (NSNEKSNKPNKP) and 117–168 (ANTS…NNKG). Positions 281-450 (ERPPVVTIMG…LLVSEVEELK (170 aa)) constitute a tr-type G domain. The interval 290-297 (GHVDHGKT) is G1. Residue 290-297 (GHVDHGKT) participates in GTP binding. The tract at residues 315–319 (GITQH) is G2. The segment at 336–339 (DTPG) is G3. GTP-binding positions include 336–340 (DTPGH) and 390–393 (NKID). Residues 390–393 (NKID) are G4. Residues 426-428 (SAK) form a G5 region.

This sequence belongs to the TRAFAC class translation factor GTPase superfamily. Classic translation factor GTPase family. IF-2 subfamily.

Its subcellular location is the cytoplasm. In terms of biological role, one of the essential components for the initiation of protein synthesis. Protects formylmethionyl-tRNA from spontaneous hydrolysis and promotes its binding to the 30S ribosomal subunits. Also involved in the hydrolysis of GTP during the formation of the 70S ribosomal complex. The polypeptide is Translation initiation factor IF-2 (Listeria welshimeri serovar 6b (strain ATCC 35897 / DSM 20650 / CCUG 15529 / CIP 8149 / NCTC 11857 / SLCC 5334 / V8)).